We begin with the raw amino-acid sequence, 127 residues long: Small ribosomal subunit protein uS13 (127 aa).

The segment at 90–127 is disordered; it reads RRHRQGLPVRGQRTRTNARTRRGRRLTVAGKKKTPAKK. Over residues 101–127 the composition is skewed to basic residues; the sequence is QRTRTNARTRRGRRLTVAGKKKTPAKK.

Belongs to the universal ribosomal protein uS13 family. Part of the 30S ribosomal subunit. Forms a loose heterodimer with protein S19. Forms two bridges to the 50S subunit in the 70S ribosome.

Its function is as follows. Located at the top of the head of the 30S subunit, it contacts several helices of the 16S rRNA. In the 70S ribosome it contacts the 23S rRNA (bridge B1a) and protein L5 of the 50S subunit (bridge B1b), connecting the 2 subunits; these bridges are implicated in subunit movement. Contacts the tRNAs in the A and P-sites. This chain is Small ribosomal subunit protein uS13, found in Synechocystis sp. (strain ATCC 27184 / PCC 6803 / Kazusa).